The primary structure comprises 91 residues: Acylphosphatase (91 aa).

The Acylphosphatase-like domain occupies 5–91 (CLHAYVGGRV…QGIAGFVVRR (87 aa)). Active-site residues include Arg-20 and Asn-38.

This sequence belongs to the acylphosphatase family.

It carries out the reaction an acyl phosphate + H2O = a carboxylate + phosphate + H(+). In Pseudomonas aeruginosa (strain ATCC 15692 / DSM 22644 / CIP 104116 / JCM 14847 / LMG 12228 / 1C / PRS 101 / PAO1), this protein is Acylphosphatase (acyP).